A 433-amino-acid polypeptide reads, in one-letter code: Serine--tRNA ligase (433 aa).

L-serine is bound at residue T235–E237. Residue R266 to E268 coordinates ATP. E289 contacts L-serine. Residue E353–S356 participates in ATP binding. Position 388 (S388) interacts with L-serine.

The protein belongs to the class-II aminoacyl-tRNA synthetase family. Type-1 seryl-tRNA synthetase subfamily. As to quaternary structure, homodimer. The tRNA molecule binds across the dimer.

It is found in the cytoplasm. The enzyme catalyses tRNA(Ser) + L-serine + ATP = L-seryl-tRNA(Ser) + AMP + diphosphate + H(+). The catalysed reaction is tRNA(Sec) + L-serine + ATP = L-seryl-tRNA(Sec) + AMP + diphosphate + H(+). Its pathway is aminoacyl-tRNA biosynthesis; selenocysteinyl-tRNA(Sec) biosynthesis; L-seryl-tRNA(Sec) from L-serine and tRNA(Sec): step 1/1. In terms of biological role, catalyzes the attachment of serine to tRNA(Ser). Is also able to aminoacylate tRNA(Sec) with serine, to form the misacylated tRNA L-seryl-tRNA(Sec), which will be further converted into selenocysteinyl-tRNA(Sec). This is Serine--tRNA ligase from Burkholderia ambifaria (strain ATCC BAA-244 / DSM 16087 / CCUG 44356 / LMG 19182 / AMMD) (Burkholderia cepacia (strain AMMD)).